The following is a 683-amino-acid chain: WD repeat-containing protein 48 homolog (683 aa).

WD repeat units lie at residues Ser27–Tyr82, Gln88–Cys130, Thr133–Asn167, Gly176–Lys215, Gly218–Thr257, Ala260–Leu299, and Lys302–Ile343. The tract at residues Leu341–Ser364 is disordered. The span at Ser351–Ser364 shows a compositional bias: low complexity. A WD 8 repeat occupies Pro389–Asp428.

This sequence belongs to the WD repeat WDR48 family. As to quaternary structure, interacts with usp-46; the interaction increases the catalytic activity of usp-46 in the presence of wdr-20. As to expression, expressed in several head neurons and cells in the tail including the anal depressor cell.

Functionally, together with wdr-20, binds to and stimulates the activity of the deubiquitinating enzyme usp-46, leading to deubiquitination and stabilization of the glr-1 glutamate receptor. This Caenorhabditis elegans protein is WD repeat-containing protein 48 homolog (wdr-48).